Reading from the N-terminus, the 716-residue chain is uncharacterized protein (716 aa).

Disordered stretches follow at residues 84 to 103 (SPSIIGVPSETQTSPVERYP) and 153 to 189 (VTDEDSDFEPQTQRPQSIARKRPGVVPSSLHSSSQTQ). Residue Ser-97 is modified to Phosphoserine. Glycyl lysine isopeptide (Lys-Gly) (interchain with G-Cter in SUMO2) cross-links involve residues Lys-201, Lys-204, Lys-237, Lys-283, and Lys-626.

This is an uncharacterized protein from Homo sapiens (Human).